A 396-amino-acid chain; its full sequence is 2-(3-amino-3-carboxypropyl)histidine synthase subunit 1 (396 aa).

Residues C89, C194, and C323 each coordinate [4Fe-4S] cluster. The disordered stretch occupies residues 372–396; sequence TNNNEANRPKREKRKPHIVVRTEAS.

It belongs to the DPH1/DPH2 family. DPH1 subfamily. As to quaternary structure, component of the 2-(3-amino-3-carboxypropyl)histidine synthase complex composed of dph-1, dph-2, dph-3 and a NADH-dependent reductase. It depends on [4Fe-4S] cluster as a cofactor.

The enzyme catalyses L-histidyl-[translation elongation factor 2] + S-adenosyl-L-methionine = 2-[(3S)-amino-3-carboxypropyl]-L-histidyl-[translation elongation factor 2] + S-methyl-5'-thioadenosine + H(+). Its pathway is protein modification; peptidyl-diphthamide biosynthesis. Its function is as follows. Catalyzes the first step of diphthamide biosynthesis, a post-translational modification of histidine which occurs in elongation factor 2. Dph-1 and dph-2 transfer a 3-amino-3-carboxypropyl (ACP) group from S-adenosyl-L-methionine (SAM) to a histidine residue, the reaction is assisted by a reduction system comprising dph-3 and a NADH-dependent reductase. In Caenorhabditis elegans, this protein is 2-(3-amino-3-carboxypropyl)histidine synthase subunit 1 (dph-1).